Consider the following 176-residue polypeptide: Large ribosomal subunit protein uL10 (176 aa).

This sequence belongs to the universal ribosomal protein uL10 family. Part of the ribosomal stalk of the 50S ribosomal subunit. The N-terminus interacts with L11 and the large rRNA to form the base of the stalk. The C-terminus forms an elongated spine to which L12 dimers bind in a sequential fashion forming a multimeric L10(L12)X complex.

Its function is as follows. Forms part of the ribosomal stalk, playing a central role in the interaction of the ribosome with GTP-bound translation factors. The protein is Large ribosomal subunit protein uL10 of Marinobacter nauticus (strain ATCC 700491 / DSM 11845 / VT8) (Marinobacter aquaeolei).